Here is a 682-residue protein sequence, read N- to C-terminus: DNA-directed RNA polymerase subunit beta' (682 aa).

Residues Cys-69, Cys-71, Cys-87, and Cys-90 each contribute to the Zn(2+) site. 3 residues coordinate Mg(2+): Asp-489, Asp-491, and Asp-493.

It belongs to the RNA polymerase beta' chain family. RpoC1 subfamily. As to quaternary structure, in plastids the minimal PEP RNA polymerase catalytic core is composed of four subunits: alpha, beta, beta', and beta''. When a (nuclear-encoded) sigma factor is associated with the core the holoenzyme is formed, which can initiate transcription. Requires Mg(2+) as cofactor. Zn(2+) is required as a cofactor.

The protein localises to the plastid. Its subcellular location is the chloroplast. It carries out the reaction RNA(n) + a ribonucleoside 5'-triphosphate = RNA(n+1) + diphosphate. Functionally, DNA-dependent RNA polymerase catalyzes the transcription of DNA into RNA using the four ribonucleoside triphosphates as substrates. The protein is DNA-directed RNA polymerase subunit beta' of Agrostis stolonifera (Creeping bentgrass).